The chain runs to 299 residues: Delta-9 desaturase-like 3 protein (299 aa).

2 helical membrane-spanning segments follow: residues 38–57 (AVGAVHLLCLLAPFNYTWEA) and 58–76 (FRFAAMVGISTNLSITFSY). The short motif at 77–82 (HRNLTH) is the Histidine box-1 element. Residues 114-118 (HRFHH) carry the Histidine box-2 motif. The next 2 helical transmembrane spans lie at 174-194 (IGLHILTFWILVYLWGGLPYL) and 198-218 (VGVGGAIGYHATWLINSACHI). The Histidine box-3 motif lies at 246–250 (HNNHH). Residues 262–282 (WYQVDLTWYLIWFFQVLGLAT) traverse the membrane as a helical segment.

It belongs to the fatty acid desaturase type 1 family. It depends on Fe cation as a cofactor.

It localises to the endoplasmic reticulum membrane. It functions in the pathway lipid metabolism; polyunsaturated fatty acid biosynthesis. This is Delta-9 desaturase-like 3 protein from Arabidopsis thaliana (Mouse-ear cress).